The sequence spans 228 residues: Urease accessory protein UreH (228 aa).

Transmembrane regions (helical) follow at residues 48–68 (VFWG…IILM), 79–99 (SLEF…ILSL), 130–150 (LFIG…LTMS), 162–182 (ILFF…LIGI), and 196–216 (AFIQ…MYNL).

Belongs to the NiCoT transporter (TC 2.A.52) family.

It is found in the cell membrane. In terms of biological role, probably facilitates nickel incorporation. May constitute a multicomponent high-affinity nickel transporter. Not essential for the expression of catalytically active urease. In Bacillus sp. (strain TB-90), this protein is Urease accessory protein UreH (ureH).